A 185-amino-acid polypeptide reads, in one-letter code: Ribosome-recycling factor (185 aa).

The protein belongs to the RRF family.

The protein resides in the cytoplasm. Functionally, responsible for the release of ribosomes from messenger RNA at the termination of protein biosynthesis. May increase the efficiency of translation by recycling ribosomes from one round of translation to another. This chain is Ribosome-recycling factor, found in Thermotoga sp. (strain RQ2).